Here is a 167-residue protein sequence, read N- to C-terminus: Crossover junction endodeoxyribonuclease RuvC (167 aa).

Residues D7, E67, and D140 contribute to the active site. 3 residues coordinate Mg(2+): D7, E67, and D140.

This sequence belongs to the RuvC family. Homodimer which binds Holliday junction (HJ) DNA. The HJ becomes 2-fold symmetrical on binding to RuvC with unstacked arms; it has a different conformation from HJ DNA in complex with RuvA. In the full resolvosome a probable DNA-RuvA(4)-RuvB(12)-RuvC(2) complex forms which resolves the HJ. Requires Mg(2+) as cofactor.

The protein resides in the cytoplasm. The enzyme catalyses Endonucleolytic cleavage at a junction such as a reciprocal single-stranded crossover between two homologous DNA duplexes (Holliday junction).. Functionally, the RuvA-RuvB-RuvC complex processes Holliday junction (HJ) DNA during genetic recombination and DNA repair. Endonuclease that resolves HJ intermediates. Cleaves cruciform DNA by making single-stranded nicks across the HJ at symmetrical positions within the homologous arms, yielding a 5'-phosphate and a 3'-hydroxyl group; requires a central core of homology in the junction. The consensus cleavage sequence is 5'-(A/T)TT(C/G)-3'. Cleavage occurs on the 3'-side of the TT dinucleotide at the point of strand exchange. HJ branch migration catalyzed by RuvA-RuvB allows RuvC to scan DNA until it finds its consensus sequence, where it cleaves and resolves the cruciform DNA. The sequence is that of Crossover junction endodeoxyribonuclease RuvC from Moorella thermoacetica (strain ATCC 39073 / JCM 9320).